The chain runs to 118 residues: Large ribosomal subunit protein bL21c (118 aa).

This sequence belongs to the bacterial ribosomal protein bL21 family. As to quaternary structure, part of the 50S ribosomal subunit.

Its subcellular location is the plastid. It localises to the chloroplast. Functionally, this protein binds to 23S rRNA. This chain is Large ribosomal subunit protein bL21c, found in Psilotum nudum (Whisk fern).